The primary structure comprises 155 residues: Aspartate 1-decarboxylase (155 aa).

Catalysis depends on Ser-24, which acts as the Schiff-base intermediate with substrate; via pyruvic acid. Ser-24 carries the pyruvic acid (Ser) modification. Thr-56 contributes to the substrate binding site. The Proton donor role is filled by Tyr-57. Position 72-74 (72-74 (GAA)) interacts with substrate.

Belongs to the PanD family. Heterooctamer of four alpha and four beta subunits. Requires pyruvate as cofactor. In terms of processing, is synthesized initially as an inactive proenzyme, which is activated by self-cleavage at a specific serine bond to produce a beta-subunit with a hydroxyl group at its C-terminus and an alpha-subunit with a pyruvoyl group at its N-terminus.

It is found in the cytoplasm. The enzyme catalyses L-aspartate + H(+) = beta-alanine + CO2. It functions in the pathway cofactor biosynthesis; (R)-pantothenate biosynthesis; beta-alanine from L-aspartate: step 1/1. In terms of biological role, catalyzes the pyruvoyl-dependent decarboxylation of aspartate to produce beta-alanine. In Agrobacterium fabrum (strain C58 / ATCC 33970) (Agrobacterium tumefaciens (strain C58)), this protein is Aspartate 1-decarboxylase.